We begin with the raw amino-acid sequence, 190 residues long: MKRVWVTGYRSYELNIFKDNDPKVQVIKEVLKNYLRAQLELNDDEFWVITGPQMGTERWGLEAALELQADFPQLKTALMFPFAEFGKQWNENNQLKLTSITQQVDFFANVSDKPYQSPQQLRNYQQFMLTHTDEAFLLYDPEYQGKTKYDYEIIQKYKEESEYSMTFVDFDELQEEAEEWAERQREKDEF.

The protein belongs to the UPF0398 family.

The chain is UPF0398 protein LAR_0869 from Limosilactobacillus reuteri subsp. reuteri (strain JCM 1112) (Lactobacillus reuteri).